A 123-amino-acid chain; its full sequence is MAVSKEDVLEFISGLSVLELSELVKEFEEKFGVSAQPVAVAGGAVAAVEAVEEKTEFDVIIVDSGDKKINVIKEIRAITGLGLKEAKDAAEQTPSTIKEGISKADAEAFKAQLEAAGAKVEVK.

It belongs to the bacterial ribosomal protein bL12 family. Homodimer. Part of the ribosomal stalk of the 50S ribosomal subunit. Forms a multimeric L10(L12)X complex, where L10 forms an elongated spine to which 2 to 4 L12 dimers bind in a sequential fashion. Binds GTP-bound translation factors.

Functionally, forms part of the ribosomal stalk which helps the ribosome interact with GTP-bound translation factors. Is thus essential for accurate translation. The protein is Large ribosomal subunit protein bL12 of Aliarcobacter butzleri (strain RM4018) (Arcobacter butzleri).